The following is a 231-amino-acid chain: NADH-ubiquinone oxidoreductase chain 4 (231 aa).

Helical transmembrane passes span 1-21 (PIAG…YGII), 34-54 (MFLP…LTCL), 63-85 (IAYS…TPWG), 89-111 (AMAL…NTTY), 128-148 (ILPM…AIPP), and 169-189 (TIIL…HMLL).

It belongs to the complex I subunit 4 family.

It localises to the mitochondrion membrane. It carries out the reaction a ubiquinone + NADH + 5 H(+)(in) = a ubiquinol + NAD(+) + 4 H(+)(out). Functionally, core subunit of the mitochondrial membrane respiratory chain NADH dehydrogenase (Complex I) that is believed to belong to the minimal assembly required for catalysis. Complex I functions in the transfer of electrons from NADH to the respiratory chain. The immediate electron acceptor for the enzyme is believed to be ubiquinone. This Bothrops bilineatus (Green jararaca) protein is NADH-ubiquinone oxidoreductase chain 4 (MT-ND4).